The following is a 239-amino-acid chain: Uridylate kinase (239 aa).

13-16 provides a ligand contact to ATP; it reads KVSG. Position 55 (Gly55) interacts with UMP. ATP-binding residues include Gly56 and Arg60. UMP-binding positions include Asp75 and 136-143; that span reads TGNPFFTT. Thr163, Gln164, Tyr169, and Asp172 together coordinate ATP.

The protein belongs to the UMP kinase family. As to quaternary structure, homohexamer.

It is found in the cytoplasm. The enzyme catalyses UMP + ATP = UDP + ADP. Its pathway is pyrimidine metabolism; CTP biosynthesis via de novo pathway; UDP from UMP (UMPK route): step 1/1. With respect to regulation, inhibited by UTP. Catalyzes the reversible phosphorylation of UMP to UDP. The protein is Uridylate kinase of Bartonella quintana (strain Toulouse) (Rochalimaea quintana).